Here is an 892-residue protein sequence, read N- to C-terminus: Integrator complex subunit 6 (892 aa).

One can recognise a VWFA domain in the interval 3 to 227 (ILLFLIDTSA…QCLESLVQKV (225 aa)). The Inhibitory loop motif lies at 630 to 637 (MMIDEADE). Disordered stretches follow at residues 665 to 692 (MSPL…GTQG), 711 to 754 (VGGT…AAPD), and 771 to 793 (PDHT…EVNE).

It belongs to the Integrator subunit 6 family. In terms of assembly, component of the Integrator complex, composed of core subunits INTS1, INTS2, INTS3, INTS4, INTS5, INTS6, INTS7, INTS8, INTS9/RC74, INTS10, INTS11/CPSF3L, INTS12, INTS13, INTS14 and INTS15. The core complex associates with protein phosphatase 2A subunits PPP2CA and PPP2R1A, to form the Integrator-PP2A (INTAC) complex.

The protein localises to the nucleus. It is found in the chromosome. Component of the integrator complex, a multiprotein complex that terminates RNA polymerase II (Pol II) transcription in the promoter-proximal region of genes. The integrator complex provides a quality checkpoint during transcription elongation by driving premature transcription termination of transcripts that are unfavorably configured for transcriptional elongation: the complex terminates transcription by (1) catalyzing dephosphorylation of the C-terminal domain (CTD) of Pol II subunit POLR2A/RPB1 and SUPT5H/SPT5, (2) degrading the exiting nascent RNA transcript via endonuclease activity and (3) promoting the release of Pol II from bound DNA. The integrator complex is also involved in terminating the synthesis of non-coding Pol II transcripts, such as enhancer RNAs (eRNAs), small nuclear RNAs (snRNAs), telomerase RNAs and long non-coding RNAs (lncRNAs). Within the integrator complex, INTS6 acts as a molecular adapter that promotes assembly of protein phosphatase 2A (PP2A) subunits to the integrator core complex, promoting recruitment of PP2A to transcription pause-release checkpoint. The sequence is that of Integrator complex subunit 6 (ints6l) from Danio rerio (Zebrafish).